The primary structure comprises 404 residues: Nicotinate phosphoribosyltransferase (404 aa).

His-224 is modified (phosphohistidine; by autocatalysis).

This sequence belongs to the NAPRTase family. Post-translationally, transiently phosphorylated on a His residue during the reaction cycle. Phosphorylation strongly increases the affinity for substrates and increases the rate of nicotinate D-ribonucleotide production. Dephosphorylation regenerates the low-affinity form of the enzyme, leading to product release.

The enzyme catalyses nicotinate + 5-phospho-alpha-D-ribose 1-diphosphate + ATP + H2O = nicotinate beta-D-ribonucleotide + ADP + phosphate + diphosphate. It functions in the pathway cofactor biosynthesis; NAD(+) biosynthesis; nicotinate D-ribonucleotide from nicotinate: step 1/1. Catalyzes the synthesis of beta-nicotinate D-ribonucleotide from nicotinate and 5-phospho-D-ribose 1-phosphate at the expense of ATP. The polypeptide is Nicotinate phosphoribosyltransferase (Photorhabdus laumondii subsp. laumondii (strain DSM 15139 / CIP 105565 / TT01) (Photorhabdus luminescens subsp. laumondii)).